The chain runs to 333 residues: Homeobox protein HMX1 (333 aa).

Disordered regions lie at residues 1–74 (MAQD…STSA), 86–109 (GTEG…APRC), and 139–204 (CASP…KKKT). Residues 17–30 (DYTQGNTDRSTAAA) show a composition bias toward polar residues. Residues 87–105 (TEGGGGTRRAAAGGGGGRG) are compositionally biased toward gly residues. Residues 144-158 (TSDRDSPELPEDTER) are compositionally biased toward basic and acidic residues. A compositionally biased stretch (gly residues) spans 159–176 (AGGGGRAAARGPAGGRQS). The span at 181-192 (EEEEERGEEAGE) shows a compositional bias: acidic residues. A DNA-binding region (homeobox) is located at residues 201–260 (KKKTRTVFSRSQVFQLESTFDVKRYLSSSERAGLAASLHLTETQVKIWFQNRRNKWKRQL). The HMX family specific domain 1 motif lies at 261–271 (AADLEAANLSH).

The protein belongs to the HMX homeobox family.

It is found in the nucleus. In terms of biological role, DNA-binding protein that binds to the 5'-CAAG-3' core sequence. May function as a transcriptional repressor. Seems to act as a transcriptional antagonist of NKX2-5. May play an important role in the development of craniofacial structures such as the eye and ear. This chain is Homeobox protein HMX1 (HMX1), found in Gallus gallus (Chicken).